The sequence spans 275 residues: F-box only protein 50 (275 aa).

Positions 1-67 are disordered; the sequence is MEEVREGHAL…LPEPAQPSEA (67 aa). A compositionally biased stretch (pro residues) spans 26-62; sequence PPSPRSPSPPPSPPPLPSPPSLPSPAAPEAPELPEPA. Residues Ser31, Ser37, and Ser49 each carry the phosphoserine modification. An FBA domain is found at 95–273; the sequence is LLLRRPLYRN…VTDSSVSVQL (179 aa).

In terms of tissue distribution, expressed in the esophagus, oral cavity, skin, tongue and reproductive organs.

The protein localises to the cytoplasm. Functionally, promotes cell proliferation. This Homo sapiens (Human) protein is F-box only protein 50 (NCCRP1).